The following is a 420-amino-acid chain: Probable secreted beta-glucosidase SUN4 (420 aa).

The signal sequence occupies residues 1 to 24 (MKLSATTLTAASLIGYSTIVSALP). The disordered stretch occupies residues 89–145 (TKSSSKVASSSESTEQIATTSSSAQTTLTSSETSTSESSVPISTSGSASTSSAASSA). Asn395 carries an N-linked (GlcNAc...) asparagine glycan.

Belongs to the SUN family. Glycosylated.

The protein localises to the secreted. Its subcellular location is the cell wall. In terms of biological role, involved in the remodeling of the cell wall during the various phases of yeast culture development and under various environmental conditions and plays a role in septation. The polypeptide is Probable secreted beta-glucosidase SUN4 (SUN4) (Saccharomyces cerevisiae (strain ATCC 204508 / S288c) (Baker's yeast)).